Reading from the N-terminus, the 437-residue chain is Pyrophosphate--fructose 6-phosphate 1-phosphotransferase (437 aa).

Gly27 is a binding site for diphosphate. A Mg(2+)-binding site is contributed by Asp122. Substrate contacts are provided by residues Thr147–Asp149, Met193–Arg195, Glu261, and Tyr323–Arg326. The active-site Proton acceptor is the Asp149.

This sequence belongs to the phosphofructokinase type A (PFKA) family. PPi-dependent PFK group II subfamily. Clade 'Short' sub-subfamily. Homotetramer. Requires Mg(2+) as cofactor. The cofactor is Mn(2+).

The protein resides in the cytoplasm. It catalyses the reaction beta-D-fructose 6-phosphate + diphosphate = beta-D-fructose 1,6-bisphosphate + phosphate + H(+). It participates in carbohydrate degradation; glycolysis; D-glyceraldehyde 3-phosphate and glycerone phosphate from D-glucose: step 3/4. Its activity is regulated as follows. Activated by AMP. Probably promotes oligomerization of the enzyme. Functionally, catalyzes the phosphorylation of D-fructose 6-phosphate, the first committing step of glycolysis. Uses inorganic phosphate (PPi) as phosphoryl donor instead of ATP like common ATP-dependent phosphofructokinases (ATP-PFKs), which renders the reaction reversible, and can thus function both in glycolysis and gluconeogenesis. Consistently, PPi-PFK can replace the enzymes of both the forward (ATP-PFK) and reverse (fructose-bisphosphatase (FBPase)) reactions. In Naegleria fowleri (Brain eating amoeba), this protein is Pyrophosphate--fructose 6-phosphate 1-phosphotransferase.